The sequence spans 501 residues: Cyclin-dependent kinase 19 (501 aa).

Met-1 is modified (N-acetylmethionine). A Protein kinase domain is found at 21–335 (EYEGCKVGRG…SEQALQDPYF (315 aa)). Residues 27–35 (VGRGTYGHV) and Lys-52 each bind ATP. Asp-151 functions as the Proton acceptor in the catalytic mechanism. The disordered stretch occupies residues 362–501 (DEPEEKGDKN…YHSSHQTHRY (140 aa)). A compositionally biased stretch (low complexity) spans 371–392 (NQPQQQNPHQQPAAPAQQTAAP). Over residues 408–421 (TAGGATAGGGGAGA) the composition is skewed to gly residues. At Ser-449 the chain carries Phosphoserine. A compositionally biased stretch (low complexity) spans 467 to 495 (YQSSVQGSSQSQSTLGYSSSQQSTQYHSS).

It belongs to the protein kinase superfamily. CMGC Ser/Thr protein kinase family. CDC2/CDKX subfamily.

Its subcellular location is the cytoplasm. The protein resides in the perinuclear region. The protein localises to the nucleus. The catalysed reaction is L-seryl-[protein] + ATP = O-phospho-L-seryl-[protein] + ADP + H(+). The enzyme catalyses L-threonyl-[protein] + ATP = O-phospho-L-threonyl-[protein] + ADP + H(+). In Mus musculus (Mouse), this protein is Cyclin-dependent kinase 19 (Cdk19).